We begin with the raw amino-acid sequence, 141 residues long: Putative antirestriction protein YubI (141 aa).

Belongs to the antirestriction protein family.

The protein is Putative antirestriction protein YubI (yubI) of Escherichia coli (strain K12).